A 452-amino-acid polypeptide reads, in one-letter code: MSTAVLENPGLGRKLSDFGQETSYIEDNCNQNGAISLIFSLKEEVGALAKVLRLFEENDVNLTHIESRPSRLKKDEYEFFTHLDKRSLPALTNIIKILRHDIGATVHELSRDKKKDTVPWFPRTIQELDRFANQILSYGAELDADHPGFKDPVYRARRKQFADIAYNYRHGQPIPRVEYMEEEKKTWGTVFKTLKSLYKTHACYEYNHIFPLLEKYCGFHEDNIPQLEDVSQFLQTCTGFRLRPVAGLLSSRDFLGGLAFRVFHCTQYIRHGSKPMYTPEPDICHELLGHVPLFSDRSFAQFSQEIGLASLGAPDEYIEKLATIYWFTVEFGLCKQGDSIKAYGAGLLSSFGELQYCLSEKPKLLPLELEKTAIQNYTVTEFQPLYYVAESFNDAKEKVRNFAATIPRPFSVRYDPYTQRIEVLDNTQQLKILADSINSEIGILCSALQKIK.

Ser16 is modified (phosphoserine; by PKA). In terms of domain architecture, ACT spans Ser36–Lys114. The Fe cation site is built by His285, His290, and Glu330.

It belongs to the biopterin-dependent aromatic amino acid hydroxylase family. As to quaternary structure, homodimer and homotetramer. It depends on Fe(2+) as a cofactor. Phosphorylation at Ser-16 increases basal activity and facilitates activation by the substrate phenylalanine.

It carries out the reaction (6R)-L-erythro-5,6,7,8-tetrahydrobiopterin + L-phenylalanine + O2 = (4aS,6R)-4a-hydroxy-L-erythro-5,6,7,8-tetrahydrobiopterin + L-tyrosine. It functions in the pathway amino-acid degradation; L-phenylalanine degradation; acetoacetate and fumarate from L-phenylalanine: step 1/6. Its activity is regulated as follows. N-terminal region of PAH is thought to contain allosteric binding sites for phenylalanine and to constitute an 'inhibitory' domain that regulates the activity of a catalytic domain in the C-terminal portion of the molecule. Functionally, catalyzes the hydroxylation of L-phenylalanine to L-tyrosine. The polypeptide is Phenylalanine-4-hydroxylase (PAH) (Homo sapiens (Human)).